We begin with the raw amino-acid sequence, 188 residues long: dTTP/UTP pyrophosphatase (188 aa).

The active-site Proton acceptor is aspartate 70.

The protein belongs to the Maf family. YhdE subfamily. A divalent metal cation is required as a cofactor.

Its subcellular location is the cytoplasm. It carries out the reaction dTTP + H2O = dTMP + diphosphate + H(+). It catalyses the reaction UTP + H2O = UMP + diphosphate + H(+). In terms of biological role, nucleoside triphosphate pyrophosphatase that hydrolyzes dTTP and UTP. May have a dual role in cell division arrest and in preventing the incorporation of modified nucleotides into cellular nucleic acids. This is dTTP/UTP pyrophosphatase from Clostridium botulinum (strain Eklund 17B / Type B).